Here is a 517-residue protein sequence, read N- to C-terminus: Cytochrome P450 1A1 (517 aa).

The segment at 34–45 is mitochondrial targeting signal; the sequence is WQPRVPKGLKSP. O-linked (GlcNAc) serine glycosylation occurs at Ser72. Residue Phe229 coordinates substrate. Position 462 (Cys462) interacts with heme.

It belongs to the cytochrome P450 family. Interacts with cytosolic chaperones HSP70 and HSP90; this interaction is required for initial targeting to mitochondria. Interacts (via mitochondrial targeting signal) with TOMM40 (via N-terminus); this interaction is required for translocation across the mitochondrial outer membrane. It depends on heme as a cofactor.

Its subcellular location is the endoplasmic reticulum membrane. It is found in the mitochondrion inner membrane. The protein resides in the microsome membrane. The protein localises to the cytoplasm. The catalysed reaction is an organic molecule + reduced [NADPH--hemoprotein reductase] + O2 = an alcohol + oxidized [NADPH--hemoprotein reductase] + H2O + H(+). The enzyme catalyses estrone + reduced [NADPH--hemoprotein reductase] + O2 = 2-hydroxyestrone + oxidized [NADPH--hemoprotein reductase] + H2O + H(+). It carries out the reaction estrone + reduced [NADPH--hemoprotein reductase] + O2 = 4-hydroxyestrone + oxidized [NADPH--hemoprotein reductase] + H2O + H(+). It catalyses the reaction estrone + reduced [NADPH--hemoprotein reductase] + O2 = 6alpha-hydroxyestrone + oxidized [NADPH--hemoprotein reductase] + H2O + H(+). The catalysed reaction is estrone + reduced [NADPH--hemoprotein reductase] + O2 = 15alpha-hydroxyestrone + oxidized [NADPH--hemoprotein reductase] + H2O + H(+). The enzyme catalyses estrone + reduced [NADPH--hemoprotein reductase] + O2 = 16alpha-hydroxyestrone + oxidized [NADPH--hemoprotein reductase] + H2O + H(+). It carries out the reaction 17beta-estradiol + reduced [NADPH--hemoprotein reductase] + O2 = 2-hydroxy-17beta-estradiol + oxidized [NADPH--hemoprotein reductase] + H2O + H(+). It catalyses the reaction 17beta-estradiol + reduced [NADPH--hemoprotein reductase] + O2 = 4-hydroxy-17beta-estradiol + oxidized [NADPH--hemoprotein reductase] + H2O + H(+). The catalysed reaction is 17beta-estradiol + reduced [NADPH--hemoprotein reductase] + O2 = 6alpha-hydroxy-17beta-estradiol + oxidized [NADPH--hemoprotein reductase] + H2O + H(+). The enzyme catalyses 17beta-estradiol + reduced [NADPH--hemoprotein reductase] + O2 = 7alpha-hydroxy-17beta-estradiol + oxidized [NADPH--hemoprotein reductase] + H2O + H(+). It carries out the reaction 17beta-estradiol + reduced [NADPH--hemoprotein reductase] + O2 = 15alpha-hydroxy-17beta-estradiol + oxidized [NADPH--hemoprotein reductase] + H2O + H(+). It catalyses the reaction (5Z,8Z,11Z)-eicosatrienoate + reduced [NADPH--hemoprotein reductase] + O2 = 19-hydroxy-(5Z,8Z,11Z)-eicosatrienoate + oxidized [NADPH--hemoprotein reductase] + H2O + H(+). The catalysed reaction is (5Z,8Z,11Z,14Z)-eicosatetraenoate + reduced [NADPH--hemoprotein reductase] + O2 = 16-hydroxy-(5Z,8Z,11Z,14Z)-eicosatetraenoate + oxidized [NADPH--hemoprotein reductase] + H2O + H(+). The enzyme catalyses (5Z,8Z,11Z,14Z)-eicosatetraenoate + reduced [NADPH--hemoprotein reductase] + O2 = 17-hydroxy-(5Z,8Z,11Z,14Z)-eicosatetraenoate + oxidized [NADPH--hemoprotein reductase] + H2O + H(+). It carries out the reaction (5Z,8Z,11Z,14Z)-eicosatetraenoate + reduced [NADPH--hemoprotein reductase] + O2 = 18-hydroxy-(5Z,8Z,11Z,14Z)-eicosatetraenoate + oxidized [NADPH--hemoprotein reductase] + H2O + H(+). It catalyses the reaction (5Z,8Z,11Z,14Z)-eicosatetraenoate + reduced [NADPH--hemoprotein reductase] + O2 = 19-hydroxy-(5Z,8Z,11Z,14Z)-eicosatetraenoate + oxidized [NADPH--hemoprotein reductase] + H2O + H(+). The catalysed reaction is (5Z,8Z,11Z,14Z,17Z)-eicosapentaenoate + reduced [NADPH--hemoprotein reductase] + O2 = 19-hydroxy-(5Z,8Z,11Z,14Z,17Z)-eicosapentaenoate + oxidized [NADPH--hemoprotein reductase] + H2O + H(+). The enzyme catalyses (5Z,8Z,11Z,14Z)-eicosatetraenoate + reduced [NADPH--hemoprotein reductase] + O2 = (8R,9S)-epoxy-(5Z,11Z,14Z)-eicosatrienoate + oxidized [NADPH--hemoprotein reductase] + H2O + H(+). It carries out the reaction (5Z,8Z,11Z,14Z)-eicosatetraenoate + reduced [NADPH--hemoprotein reductase] + O2 = (11R,12S)-epoxy-(5Z,8Z,14Z)-eicosatrienoate + oxidized [NADPH--hemoprotein reductase] + H2O + H(+). It catalyses the reaction (5Z,8Z,11Z,14Z)-eicosatetraenoate + reduced [NADPH--hemoprotein reductase] + O2 = (14S,15R)-epoxy-(5Z,8Z,11Z)-eicosatrienoate + oxidized [NADPH--hemoprotein reductase] + H2O + H(+). The catalysed reaction is (5Z,8Z,11Z,14Z)-eicosatetraenoate + reduced [NADPH--hemoprotein reductase] + O2 = (14R,15S)-epoxy-(5Z,8Z,11Z)-eicosatrienoate + oxidized [NADPH--hemoprotein reductase] + H2O + H(+). The enzyme catalyses (5Z,8Z,11Z,14Z,17Z)-eicosapentaenoate + reduced [NADPH--hemoprotein reductase] + O2 = (17R,18S)-epoxy-(5Z,8Z,11Z,14Z)-eicosatetraenoate + oxidized [NADPH--hemoprotein reductase] + H2O + H(+). It carries out the reaction (4Z,7Z,10Z,13Z,16Z,19Z)-docosahexaenoate + reduced [NADPH--hemoprotein reductase] + O2 = (19S,20R)-epoxy-(4Z,7Z,10Z,13Z,16Z)-docosapentaenoate + oxidized [NADPH--hemoprotein reductase] + H2O + H(+). It catalyses the reaction (4Z,7Z,10Z,13Z,16Z,19Z)-docosahexaenoate + reduced [NADPH--hemoprotein reductase] + O2 = (19R,20S)-epoxy-(4Z,7Z,10Z,13Z,16Z)-docosapentaenoate + oxidized [NADPH--hemoprotein reductase] + H2O + H(+). The catalysed reaction is all-trans-retinol + reduced [NADPH--hemoprotein reductase] + O2 = all-trans-retinal + oxidized [NADPH--hemoprotein reductase] + 2 H2O + H(+). The enzyme catalyses all-trans-retinal + reduced [NADPH--hemoprotein reductase] + O2 = all-trans-retinoate + oxidized [NADPH--hemoprotein reductase] + H2O + 2 H(+). It carries out the reaction (13S)-hydroperoxy-(9Z,11E)-octadecadienoate = 13-oxo-(9Z,11E)-octadecadienoate + H2O. It catalyses the reaction (12S)-hydroperoxy-(5Z,8Z,10E,14Z)-eicosatetraenoate = 12-oxo-(5Z,8Z,10E,14Z)-eicosatetraenoate + H2O. The catalysed reaction is (15S)-hydroperoxy-(5Z,8Z,11Z,13E)-eicosatetraenoate = 15-oxo-(5Z,8Z,11Z,13E)-eicosatetraenoate + H2O. The enzyme catalyses (5S)-hydroperoxy-(6E,8Z,11Z,14Z)-eicosatetraenoate = 5-oxo-(6E,8Z,11Z,14Z)-eicosatetraenoate + H2O. The protein operates within steroid hormone biosynthesis. It participates in lipid metabolism; fatty acid metabolism. Its pathway is cofactor metabolism; retinol metabolism. A cytochrome P450 monooxygenase involved in the metabolism of various endogenous substrates, including fatty acids, steroid hormones and vitamins. Mechanistically, uses molecular oxygen inserting one oxygen atom into a substrate, and reducing the second into a water molecule, with two electrons provided by NADPH via cytochrome P450 reductase (CPR; NADPH-ferrihemoprotein reductase). Catalyzes the hydroxylation of carbon-hydrogen bonds. Exhibits high catalytic activity for the formation of hydroxyestrogens from estrone (E1) and 17beta-estradiol (E2), namely 2-hydroxy E1 and E2, as well as D-ring hydroxylated E1 and E2 at the C15alpha and C16alpha positions. Displays different regioselectivities for polyunsaturated fatty acids (PUFA) hydroxylation. Catalyzes the epoxidation of double bonds of certain PUFA. Converts arachidonic acid toward epoxyeicosatrienoic acid (EET) regioisomers, 8,9-, 11,12-, and 14,15-EET, that function as lipid mediators in the vascular system. Displays an absolute stereoselectivity in the epoxidation of eicosapentaenoic acid (EPA) producing the 17(R),18(S) enantiomer. May play an important role in all-trans retinoic acid biosynthesis in extrahepatic tissues. Catalyzes two successive oxidative transformation of all-trans retinol to all-trans retinal and then to the active form all-trans retinoic acid. May also participate in eicosanoids metabolism by converting hydroperoxide species into oxo metabolites (lipoxygenase-like reaction, NADPH-independent). The polypeptide is Cytochrome P450 1A1 (CYP1A1) (Felis catus (Cat)).